Consider the following 197-residue polypeptide: LexA repressor (197 aa).

Residues V28 to I47 constitute a DNA-binding region (H-T-H motif). Catalysis depends on for autocatalytic cleavage activity residues S119 and K156.

Belongs to the peptidase S24 family. As to quaternary structure, homodimer.

The catalysed reaction is Hydrolysis of Ala-|-Gly bond in repressor LexA.. In terms of biological role, represses a number of genes involved in the response to DNA damage (SOS response), including recA and lexA. In the presence of single-stranded DNA, RecA interacts with LexA causing an autocatalytic cleavage which disrupts the DNA-binding part of LexA, leading to derepression of the SOS regulon and eventually DNA repair. The protein is LexA repressor of Thermotoga petrophila (strain ATCC BAA-488 / DSM 13995 / JCM 10881 / RKU-1).